Consider the following 203-residue polypeptide: Putative 3-methyladenine DNA glycosylase (203 aa).

The protein belongs to the DNA glycosylase MPG family.

The sequence is that of Putative 3-methyladenine DNA glycosylase from Clostridium botulinum (strain ATCC 19397 / Type A).